Reading from the N-terminus, the 255-residue chain is tRNA (guanine-N(1)-)-methyltransferase (255 aa).

S-adenosyl-L-methionine is bound by residues Gly113 and 133 to 138 (IGDYVL).

It belongs to the RNA methyltransferase TrmD family. In terms of assembly, homodimer.

Its subcellular location is the cytoplasm. The enzyme catalyses guanosine(37) in tRNA + S-adenosyl-L-methionine = N(1)-methylguanosine(37) in tRNA + S-adenosyl-L-homocysteine + H(+). In terms of biological role, specifically methylates guanosine-37 in various tRNAs. This chain is tRNA (guanine-N(1)-)-methyltransferase, found in Enterobacter sp. (strain 638).